The primary structure comprises 549 residues: O-fucosyltransferase 29 (549 aa).

Residues 43–63 traverse the membrane as a helical; Signal-anchor for type II membrane protein segment; sequence TVMWTWVCGFMLFSLGVISLF. Asparagine 152 is a glycosylation site (N-linked (GlcNAc...) asparagine). Residue 292–294 coordinates substrate; the sequence is HLR. N-linked (GlcNAc...) asparagine glycans are attached at residues asparagine 359 and asparagine 527. The disordered stretch occupies residues 506–549; the sequence is PFSYDKTSTDDEEEDMSEENHNSTSPGHVHLSSADNERDEVFPD. Residues 540–549 show a composition bias toward basic and acidic residues; sequence DNERDEVFPD.

Belongs to the glycosyltransferase GT106 family.

The protein localises to the membrane. It functions in the pathway glycan metabolism. This Arabidopsis thaliana (Mouse-ear cress) protein is O-fucosyltransferase 29.